A 130-amino-acid chain; its full sequence is Small ribosomal subunit protein uS8 (130 aa).

It belongs to the universal ribosomal protein uS8 family. In terms of assembly, part of the 30S ribosomal subunit. Contacts proteins S5 and S12.

Functionally, one of the primary rRNA binding proteins, it binds directly to 16S rRNA central domain where it helps coordinate assembly of the platform of the 30S subunit. The sequence is that of Small ribosomal subunit protein uS8 from Buchnera aphidicola subsp. Cinara cedri (strain Cc).